The chain runs to 153 residues: Lipoprotein signal peptidase (153 aa).

Transmembrane regions (helical) follow at residues I6–V26, Q60–H80, and D85–I105. Active-site residues include D115 and D131. Residues F124–A144 form a helical membrane-spanning segment.

It belongs to the peptidase A8 family.

Its subcellular location is the cell membrane. The catalysed reaction is Release of signal peptides from bacterial membrane prolipoproteins. Hydrolyzes -Xaa-Yaa-Zaa-|-(S,diacylglyceryl)Cys-, in which Xaa is hydrophobic (preferably Leu), and Yaa (Ala or Ser) and Zaa (Gly or Ala) have small, neutral side chains.. It participates in protein modification; lipoprotein biosynthesis (signal peptide cleavage). In terms of biological role, this protein specifically catalyzes the removal of signal peptides from prolipoproteins. In Streptococcus pneumoniae (strain ATCC BAA-255 / R6), this protein is Lipoprotein signal peptidase.